The primary structure comprises 396 residues: Imidazolonepropionase (396 aa).

Residues H69 and H71 each coordinate Fe(3+). H69 and H71 together coordinate Zn(2+). The 4-imidazolone-5-propanoate site is built by R78, Y136, and H163. Y136 serves as a coordination point for N-formimidoyl-L-glutamate. H224 serves as a coordination point for Fe(3+). H224 serves as a coordination point for Zn(2+). Q227 is a binding site for 4-imidazolone-5-propanoate. Fe(3+) is bound at residue D298. D298 is a binding site for Zn(2+). N-formimidoyl-L-glutamate contacts are provided by N300 and G302. Residue T303 participates in 4-imidazolone-5-propanoate binding.

It belongs to the metallo-dependent hydrolases superfamily. HutI family. The cofactor is Zn(2+). Fe(3+) is required as a cofactor.

The protein resides in the cytoplasm. The enzyme catalyses 4-imidazolone-5-propanoate + H2O = N-formimidoyl-L-glutamate. It functions in the pathway amino-acid degradation; L-histidine degradation into L-glutamate; N-formimidoyl-L-glutamate from L-histidine: step 3/3. Catalyzes the hydrolytic cleavage of the carbon-nitrogen bond in imidazolone-5-propanoate to yield N-formimidoyl-L-glutamate. It is the third step in the universal histidine degradation pathway. This Cutibacterium acnes (strain DSM 16379 / KPA171202) (Propionibacterium acnes) protein is Imidazolonepropionase.